Reading from the N-terminus, the 733-residue chain is Polyribonucleotide nucleotidyltransferase (733 aa).

Asp-488 and Asp-494 together coordinate Mg(2+). Positions 555 to 614 (PRIEMMTIPVEKIREVIGSGGKVIREIVEQTGAKINIEDDGTIKIASPDTKSIETAKSWI) constitute a KH domain. The S1 motif domain occupies 624–692 (GTIYQGTVVK…ERGKIRLSMK (69 aa)). Residues 698 to 733 (TGKEIPQDDLIKTEKEQNPDEKNKSEKKRHNRKKED) form a disordered region. Residues 702–721 (IPQDDLIKTEKEQNPDEKNK) are compositionally biased toward basic and acidic residues. Basic residues predominate over residues 722 to 733 (SEKKRHNRKKED).

It belongs to the polyribonucleotide nucleotidyltransferase family. The cofactor is Mg(2+).

Its subcellular location is the cytoplasm. It catalyses the reaction RNA(n+1) + phosphate = RNA(n) + a ribonucleoside 5'-diphosphate. Involved in mRNA degradation. Catalyzes the phosphorolysis of single-stranded polyribonucleotides processively in the 3'- to 5'-direction. This chain is Polyribonucleotide nucleotidyltransferase, found in Bartonella bacilliformis (strain ATCC 35685 / KC583 / Herrer 020/F12,63).